The following is a 224-amino-acid chain: Uracil-DNA glycosylase (224 aa).

Asp-61 serves as the catalytic Proton acceptor.

The protein belongs to the uracil-DNA glycosylase (UDG) superfamily. UNG family.

It is found in the cytoplasm. The enzyme catalyses Hydrolyzes single-stranded DNA or mismatched double-stranded DNA and polynucleotides, releasing free uracil.. In terms of biological role, excises uracil residues from the DNA which can arise as a result of misincorporation of dUMP residues by DNA polymerase or due to deamination of cytosine. The sequence is that of Uracil-DNA glycosylase from Mannheimia succiniciproducens (strain KCTC 0769BP / MBEL55E).